Reading from the N-terminus, the 187-residue chain is ATP synthase subunit b, chloroplastic (187 aa).

The helical transmembrane segment at 34–56 threads the bilayer; the sequence is LINLAAVIGLLFYSGRSFLTNLL.

This sequence belongs to the ATPase B chain family. F-type ATPases have 2 components, F(1) - the catalytic core - and F(0) - the membrane proton channel. F(1) has five subunits: alpha(3), beta(3), gamma(1), delta(1), epsilon(1). F(0) has four main subunits: a(1), b(1), b'(1) and c(10-14). The alpha and beta chains form an alternating ring which encloses part of the gamma chain. F(1) is attached to F(0) by a central stalk formed by the gamma and epsilon chains, while a peripheral stalk is formed by the delta, b and b' chains.

The protein resides in the plastid. Its subcellular location is the chloroplast thylakoid membrane. Its function is as follows. F(1)F(0) ATP synthase produces ATP from ADP in the presence of a proton or sodium gradient. F-type ATPases consist of two structural domains, F(1) containing the extramembraneous catalytic core and F(0) containing the membrane proton channel, linked together by a central stalk and a peripheral stalk. During catalysis, ATP synthesis in the catalytic domain of F(1) is coupled via a rotary mechanism of the central stalk subunits to proton translocation. Component of the F(0) channel, it forms part of the peripheral stalk, linking F(1) to F(0). The polypeptide is ATP synthase subunit b, chloroplastic (Chlorokybus atmophyticus (Soil alga)).